The primary structure comprises 305 residues: Serine/threonine-protein phosphatase PP-X isozyme 2 (305 aa).

Mn(2+) contacts are provided by Asp51, His53, Asp79, and Asn111. The active-site Proton donor is His112. Residues His161 and His236 each coordinate Mn(2+).

It belongs to the PPP phosphatase family. PP-4 (PP-X) subfamily. Mn(2+) serves as cofactor. As to expression, ubiquitous, mostly expressed in root mersitems, flowers, and vascular tissues.

It localises to the plastid stroma. It carries out the reaction O-phospho-L-seryl-[protein] + H2O = L-seryl-[protein] + phosphate. The enzyme catalyses O-phospho-L-threonyl-[protein] + H2O = L-threonyl-[protein] + phosphate. The chain is Serine/threonine-protein phosphatase PP-X isozyme 2 (PPX2) from Arabidopsis thaliana (Mouse-ear cress).